The sequence spans 318 residues: Biotin synthase (318 aa).

The region spanning 44 to 273 is the Radical SAM core domain; sequence LCGNKFDLCT…TVQIRLAGGR (230 aa). [4Fe-4S] cluster is bound by residues C62, C66, and C69. Residues S106, C138, C198, and R268 each coordinate [2Fe-2S] cluster.

This sequence belongs to the radical SAM superfamily. Biotin synthase family. As to quaternary structure, homodimer. [4Fe-4S] cluster serves as cofactor. Requires [2Fe-2S] cluster as cofactor.

It carries out the reaction (4R,5S)-dethiobiotin + (sulfur carrier)-SH + 2 reduced [2Fe-2S]-[ferredoxin] + 2 S-adenosyl-L-methionine = (sulfur carrier)-H + biotin + 2 5'-deoxyadenosine + 2 L-methionine + 2 oxidized [2Fe-2S]-[ferredoxin]. Its pathway is cofactor biosynthesis; biotin biosynthesis; biotin from 7,8-diaminononanoate: step 2/2. In terms of biological role, catalyzes the conversion of dethiobiotin (DTB) to biotin by the insertion of a sulfur atom into dethiobiotin via a radical-based mechanism. The polypeptide is Biotin synthase (Clostridium botulinum (strain Loch Maree / Type A3)).